Reading from the N-terminus, the 149-residue chain is Prefoldin subunit alpha (149 aa).

It belongs to the prefoldin subunit alpha family. As to quaternary structure, heterohexamer of two alpha and four beta subunits.

The protein resides in the cytoplasm. In terms of biological role, molecular chaperone capable of stabilizing a range of proteins. Seems to fulfill an ATP-independent, HSP70-like function in archaeal de novo protein folding. The chain is Prefoldin subunit alpha from Methanospirillum hungatei JF-1 (strain ATCC 27890 / DSM 864 / NBRC 100397 / JF-1).